We begin with the raw amino-acid sequence, 612 residues long: Zinc metalloproteinase-disintegrin-like 2d (612 aa).

The first 20 residues, 1-20 (MIQVLLVTICLAVFPYQGSS), serve as a signal peptide directing secretion. Positions 21–189 (IILGSGNVND…KKASQLNLTP (169 aa)) are excised as a propeptide. One can recognise a Peptidase M12B domain in the interval 199-395 (KYIELVIVAD…NRPPCILNKP (197 aa)). E202 serves as a coordination point for Ca(2+). A glycan (N-linked (GlcNAc...) asparagine) is linked at N218. Residue D286 participates in Ca(2+) binding. Cystine bridges form between C310–C390, C350–C374, and C352–C357. Residue H335 participates in Zn(2+) binding. The active site involves E336. Positions 339 and 345 each coordinate Zn(2+). Positions 390, 393, 405, 408, 410, 412, 415, and 418 each coordinate Ca(2+). One can recognise a Disintegrin domain in the interval 403–489 (PPVCGNYFVE…DCPTDNFQRN (87 aa)). Cystine bridges form between C406/C435, C417/C430, C419/C425, C429/C452, C443/C449, C448/C474, C461/C481, C468/C500, C493/C505, C512/C562, C527/C573, C540/C550, C557/C599, and C593/C605. The D/ECD-tripeptide motif lies at 467–469 (ECD).

This sequence belongs to the venom metalloproteinase (M12B) family. P-III subfamily. Zn(2+) is required as a cofactor. Expressed by the venom gland.

Its subcellular location is the secreted. Snake venom metalloproteinase that impairs hemostasis in the envenomed animal. The sequence is that of Zinc metalloproteinase-disintegrin-like 2d from Crotalus adamanteus (Eastern diamondback rattlesnake).